We begin with the raw amino-acid sequence, 142 residues long: Hemoglobin subunit pi (142 aa).

The 141-residue stretch at 2–142 (TLTQAEKAAV…VSSVLTEKYR (141 aa)) folds into the Globin domain. Heme b-binding residues include histidine 59 and histidine 88.

The protein belongs to the globin family.

The pi' chain is the counterpart of the alpha chain in the major early embryonic hemoglobin P. The polypeptide is Hemoglobin subunit pi (Cairina moschata (Muscovy duck)).